Here is a 239-residue protein sequence, read N- to C-terminus: Lactate utilization protein A 1 (239 aa).

The protein belongs to the LutA/YkgE family.

In terms of biological role, is involved in L-lactate degradation and allows cells to grow with lactate as the sole carbon source. This chain is Lactate utilization protein A 1, found in Bacillus cereus (strain AH820).